Here is a 125-residue protein sequence, read N- to C-terminus: UPF0231 protein HD_1708 (125 aa).

This sequence belongs to the UPF0231 family.

The polypeptide is UPF0231 protein HD_1708 (Haemophilus ducreyi (strain 35000HP / ATCC 700724)).